We begin with the raw amino-acid sequence, 329 residues long: Tryptophan--tRNA ligase (329 aa).

ATP is bound by residues 9–11 and 17–18; these read QPS and GN. The short motif at 10-18 is the 'HIGH' region element; sequence PSGIPTIGN. L-tryptophan is bound at residue Asp-133. ATP-binding positions include 145 to 147, Val-184, and 193 to 197; these read GDD and KMSKS. Positions 193–197 match the 'KMSKS' region motif; that stretch reads KMSKS.

Belongs to the class-I aminoacyl-tRNA synthetase family. Homodimer.

It is found in the cytoplasm. It catalyses the reaction tRNA(Trp) + L-tryptophan + ATP = L-tryptophyl-tRNA(Trp) + AMP + diphosphate + H(+). Its function is as follows. Catalyzes the attachment of tryptophan to tRNA(Trp). This Staphylococcus aureus (strain MRSA252) protein is Tryptophan--tRNA ligase.